The following is a 379-amino-acid chain: Pathogen-associated molecular patterns-induced protein A70 (379 aa).

Residues 7 to 29 (VASFFTPTTLFLLLNLMIGTIVV) form a helical membrane-spanning segment. Asn-122 carries N-linked (GlcNAc...) asparagine glycosylation. The segment at 133–154 (TGSDPHSHSHSHLDLHPDPAPA) is disordered. Over residues 137–149 (PHSHSHSHLDLHP) the composition is skewed to basic and acidic residues. N-linked (GlcNAc...) asparagine glycosylation occurs at Asn-170. 2 disordered regions span residues 216 to 238 (PEED…LTRA) and 256 to 347 (SDPD…DGVD). Positions 221-231 (PTGTGVNSQIN) are enriched in polar residues. 2 stretches are compositionally biased toward basic and acidic residues: residues 256-285 (SDPD…ESKK) and 322-335 (SLER…RVER).

The protein localises to the membrane. The sequence is that of Pathogen-associated molecular patterns-induced protein A70 from Arabidopsis thaliana (Mouse-ear cress).